The sequence spans 345 residues: Protein RecA (345 aa).

Position 66 to 73 (66 to 73 (GPESSGKT)) interacts with ATP.

Belongs to the RecA family.

The protein resides in the cytoplasm. Its function is as follows. Can catalyze the hydrolysis of ATP in the presence of single-stranded DNA, the ATP-dependent uptake of single-stranded DNA by duplex DNA, and the ATP-dependent hybridization of homologous single-stranded DNAs. It interacts with LexA causing its activation and leading to its autocatalytic cleavage. The chain is Protein RecA from Helicobacter hepaticus (strain ATCC 51449 / 3B1).